We begin with the raw amino-acid sequence, 231 residues long: Cytidylate kinase (231 aa).

18–26 (GPSGTGKSS) is a binding site for ATP.

The protein belongs to the cytidylate kinase family. Type 1 subfamily.

It is found in the cytoplasm. It carries out the reaction CMP + ATP = CDP + ADP. It catalyses the reaction dCMP + ATP = dCDP + ADP. This Streptomyces avermitilis (strain ATCC 31267 / DSM 46492 / JCM 5070 / NBRC 14893 / NCIMB 12804 / NRRL 8165 / MA-4680) protein is Cytidylate kinase.